Here is a 193-residue protein sequence, read N- to C-terminus: Acyl carrier protein phosphodiesterase (193 aa).

The protein belongs to the AcpH family.

The catalysed reaction is holo-[ACP] + H2O = apo-[ACP] + (R)-4'-phosphopantetheine + H(+). Its function is as follows. Converts holo-ACP to apo-ACP by hydrolytic cleavage of the phosphopantetheine prosthetic group from ACP. The protein is Acyl carrier protein phosphodiesterase of Klebsiella pneumoniae (strain 342).